A 454-amino-acid chain; its full sequence is NADP-specific glutamate dehydrogenase (454 aa).

Ser-2 is subject to N-acetylserine. Lys-114 is an active-site residue.

Belongs to the Glu/Leu/Phe/Val dehydrogenases family. As to quaternary structure, homohexamer.

It catalyses the reaction L-glutamate + NADP(+) + H2O = 2-oxoglutarate + NH4(+) + NADPH + H(+). This Neurospora sitophila (Chrysonilia sitophila) protein is NADP-specific glutamate dehydrogenase (GDH).